The primary structure comprises 894 residues: Leucine--tRNA ligase, mitochondrial (894 aa).

The N-terminal 9 residues, 1 to 9, are a transit peptide targeting the mitochondrion; it reads MLPRPSSRF. The short motif at 56-66 is the 'HIGH' region element; it reads PYPSGVLHIGH. The 'KMSKS' region signature appears at 646–650; the sequence is KMSKS. ATP is bound at residue K649.

This sequence belongs to the class-I aminoacyl-tRNA synthetase family.

Its subcellular location is the mitochondrion matrix. The catalysed reaction is tRNA(Leu) + L-leucine + ATP = L-leucyl-tRNA(Leu) + AMP + diphosphate. This chain is Leucine--tRNA ligase, mitochondrial (NAM2), found in Saccharomyces paradoxus (Yeast).